Reading from the N-terminus, the 261-residue chain is Cytochrome c oxidase subunit 3 (261 aa).

Topologically, residues 1 to 15 (MTHQTHAYHMVNPSP) are mitochondrial matrix. The helical transmembrane segment at 16–34 (WPLTGALSALLMTSGLAMW) threads the bilayer. The Mitochondrial intermembrane portion of the chain corresponds to 35–40 (FHFNST). A helical membrane pass occupies residues 41 to 66 (LLLALGLLTNILTMYQWWRDIIREST). Residues 67–72 (FQGHHT) are Mitochondrial matrix-facing. A helical transmembrane segment spans residues 73–105 (SIVQKGLRYGMILFIISEVFFFSGFFWAFYHSS). The Mitochondrial intermembrane segment spans residues 106–128 (LAPTPELGGCWPPTGIHPLNPLE). A helical transmembrane segment spans residues 129 to 152 (VPLLNTSVLLASGVSITWAHHSLM). Residues 153-155 (EGN) are Mitochondrial matrix-facing. Residues 156–183 (RKNMLQGLFITISLGVYFTLLQASEYYE) traverse the membrane as a helical segment. Residues 184–190 (ASFTISD) are Mitochondrial intermembrane-facing. A helical membrane pass occupies residues 191-223 (GVYGSTFFVATGFHGLHVIIGSTFLIVCFLRQL). Residues 224–232 (KFHFTSSHH) are Mitochondrial matrix-facing. Residues 233–256 (FGFEAAAWYWHFVDVVWLFLYVSI) form a helical membrane-spanning segment. Topologically, residues 257–261 (YWWGS) are mitochondrial intermembrane.

This sequence belongs to the cytochrome c oxidase subunit 3 family. In terms of assembly, component of the cytochrome c oxidase (complex IV, CIV), a multisubunit enzyme composed of 14 subunits. The complex is composed of a catalytic core of 3 subunits MT-CO1, MT-CO2 and MT-CO3, encoded in the mitochondrial DNA, and 11 supernumerary subunits COX4I, COX5A, COX5B, COX6A, COX6B, COX6C, COX7A, COX7B, COX7C, COX8 and NDUFA4, which are encoded in the nuclear genome. The complex exists as a monomer or a dimer and forms supercomplexes (SCs) in the inner mitochondrial membrane with NADH-ubiquinone oxidoreductase (complex I, CI) and ubiquinol-cytochrome c oxidoreductase (cytochrome b-c1 complex, complex III, CIII), resulting in different assemblies (supercomplex SCI(1)III(2)IV(1) and megacomplex MCI(2)III(2)IV(2)).

The protein localises to the mitochondrion inner membrane. It catalyses the reaction 4 Fe(II)-[cytochrome c] + O2 + 8 H(+)(in) = 4 Fe(III)-[cytochrome c] + 2 H2O + 4 H(+)(out). In terms of biological role, component of the cytochrome c oxidase, the last enzyme in the mitochondrial electron transport chain which drives oxidative phosphorylation. The respiratory chain contains 3 multisubunit complexes succinate dehydrogenase (complex II, CII), ubiquinol-cytochrome c oxidoreductase (cytochrome b-c1 complex, complex III, CIII) and cytochrome c oxidase (complex IV, CIV), that cooperate to transfer electrons derived from NADH and succinate to molecular oxygen, creating an electrochemical gradient over the inner membrane that drives transmembrane transport and the ATP synthase. Cytochrome c oxidase is the component of the respiratory chain that catalyzes the reduction of oxygen to water. Electrons originating from reduced cytochrome c in the intermembrane space (IMS) are transferred via the dinuclear copper A center (CU(A)) of subunit 2 and heme A of subunit 1 to the active site in subunit 1, a binuclear center (BNC) formed by heme A3 and copper B (CU(B)). The BNC reduces molecular oxygen to 2 water molecules using 4 electrons from cytochrome c in the IMS and 4 protons from the mitochondrial matrix. The polypeptide is Cytochrome c oxidase subunit 3 (MT-CO3) (Equus asinus (Donkey)).